An 82-amino-acid chain; its full sequence is Penaeidin-3f (82 aa).

An N-terminal signal peptide occupies residues 1-19 (MRLVACLVFLASFALVCQG). The residue at position 20 (Gln-20) is a Pyrrolidone carboxylic acid. Intrachain disulfides connect Cys-51–Cys-66, Cys-55–Cys-73, and Cys-67–Cys-74. Position 81 is a serine amide (Ser-81).

Belongs to the penaeidin family.

The protein localises to the cytoplasmic granule. In terms of biological role, antibacterial and antifungal activity. Presents chitin-binding activity. This Penaeus vannamei (Whiteleg shrimp) protein is Penaeidin-3f.